The chain runs to 209 residues: Protein-L-isoaspartate O-methyltransferase (209 aa).

Ser59 is a catalytic residue.

This sequence belongs to the methyltransferase superfamily. L-isoaspartyl/D-aspartyl protein methyltransferase family.

It is found in the cytoplasm. It catalyses the reaction [protein]-L-isoaspartate + S-adenosyl-L-methionine = [protein]-L-isoaspartate alpha-methyl ester + S-adenosyl-L-homocysteine. Functionally, catalyzes the methyl esterification of L-isoaspartyl residues in peptides and proteins that result from spontaneous decomposition of normal L-aspartyl and L-asparaginyl residues. It plays a role in the repair and/or degradation of damaged proteins. The sequence is that of Protein-L-isoaspartate O-methyltransferase from Helicobacter pylori (strain P12).